The primary structure comprises 490 residues: Polyamine transporter RMV1 (490 aa).

Residues 1-21 are compositionally biased toward polar residues; sequence MTELSSPNLDSASQKPRISTE. A disordered region spans residues 1 to 38; that stretch reads MTELSSPNLDSASQKPRISTENPPPPPPHISIGVTTGD. A run of 12 helical transmembrane segments spans residues 53–73, 83–103, 116–136, 160–180, 188–208, 231–248, 273–293, 303–323, 363–383, 386–406, 425–445, and 448–468; these read ITVL…PFGI, LLAI…EALI, GYVV…QGWV, IPIL…TVAL, LSIV…PFVV, GVNW…LNYW, LLLV…AIAL, FADI…QAAA, TPWV…WLSF, IVAA…ITFV, VLGS…IMAF, and LKVA…QPCL.

The protein belongs to the amino acid-polyamine-organocation (APC) superfamily. Polyamine:cation symporter (PHS) (TC 2.A.3.12) family.

The protein localises to the cell membrane. Its function is as follows. Cell membrane polyamine/proton symporter involved in the polyamine uptake in cells. Possesses high affinity for spermine and spermidine and lower affinity for putrescine. Transports paraquat, a polyamine analog, and thus confers sensitivity to this chemical which is used as a herbicide. This is Polyamine transporter RMV1 (RMV1) from Arabidopsis thaliana (Mouse-ear cress).